A 434-amino-acid polypeptide reads, in one-letter code: Probable carboxypeptidase BDBG_01803 (434 aa).

A signal peptide spans 1–20 (MKLSHLAAALSAQLVAPVAA). 3 N-linked (GlcNAc...) asparagine glycosylation sites follow: Asn-35, Asn-136, and Asn-150. Asp-160 provides a ligand contact to Zn(2+). Residue Glu-192 is the Proton acceptor of the active site. Zn(2+) is bound at residue Glu-193. N-linked (GlcNAc...) asparagine glycosylation is present at Asn-343.

The protein belongs to the peptidase M20A family. It depends on Zn(2+) as a cofactor.

It localises to the secreted. The sequence is that of Probable carboxypeptidase BDBG_01803 from Blastomyces gilchristii (strain SLH14081) (Blastomyces dermatitidis).